Reading from the N-terminus, the 117-residue chain is Large ribosomal subunit protein bL20 (117 aa).

Belongs to the bacterial ribosomal protein bL20 family.

Binds directly to 23S ribosomal RNA and is necessary for the in vitro assembly process of the 50S ribosomal subunit. It is not involved in the protein synthesizing functions of that subunit. The chain is Large ribosomal subunit protein bL20 from Helicobacter hepaticus (strain ATCC 51449 / 3B1).